Reading from the N-terminus, the 178-residue chain is FXYD domain-containing ion transport regulator 5 (178 aa).

Positions 1-21 (MSLSSRLCLLTIVALILPSRG) are cleaved as a signal peptide. Residues 21–59 (GQTPKKPTSIFTADQTSATTRDNVPDPDQTSPGVQTTPL) are compositionally biased toward polar residues. The interval 21-130 (GQTPKKPTSI…SYIEHPLDSN (110 aa)) is disordered. Topologically, residues 22–145 (QTPKKPTSIF…YYDDTTLRKR (124 aa)) are extracellular. Positions 67 to 79 (TGSQTAAQTETQQ) are enriched in low complexity. Positions 80–100 (LTKMATSNPVSDPGPHTSSKK) are enriched in polar residues. Residues 146 to 166 (GLLVAAVLFITGIIILTSGKC) traverse the membrane as a helical segment. Residues 167–178 (RQLSQFCLNRHR) are Cytoplasmic-facing.

It belongs to the FXYD family. In terms of assembly, regulatory subunit of the sodium/potassium-transporting ATPase which is composed of a catalytic alpha subunit, a non-catalytic beta subunit and an additional regulatory subunit. The regulatory subunit, a member of the FXYD protein family, modulates the enzymatic activity in a tissue- and isoform-specific way by changing affinities of the Na+/K+-ATPase toward Na(+), K(+) or ATP. Post-translationally, glycosylated. Expressed mainly in epithelial tissue, such as lung, intestine and kidney. Not detected in brain, liver, muscle, and heart.

The protein resides in the cell membrane. It localises to the basolateral cell membrane. Functionally, associates with and regulates the activity of the sodium/potassium-transporting ATPase (NKA) which catalyzes the hydrolysis of ATP coupled with the exchange of Na(+) and K(+) ions across the plasma membrane. May increase NKA activity by increasing the apparent affinity for Na(+). Involved in down-regulation of E-cadherin which results in reduced cell adhesion. Promotes metastasis. The sequence is that of FXYD domain-containing ion transport regulator 5 (Fxyd5) from Mus musculus (Mouse).